Reading from the N-terminus, the 63-residue chain is MRIHYLLFTFLLVLLSPLAAFTQIINNPITCMTNGAICWGPCPTAFRQIGNCGHFKVRCCKIR.

Positions 1–22 (MRIHYLLFTFLLVLLSPLAAFT) are cleaved as a signal peptide. A Pyrrolidone carboxylic acid modification is found at Gln-23. Cystine bridges form between Cys-31–Cys-59, Cys-38–Cys-52, and Cys-42–Cys-60.

It belongs to the beta-defensin family. As to expression, tongue, esophagus and trachea.

The protein localises to the secreted. Its function is as follows. Exhibits antimicrobial activity against Gram-negative bacteria and Gram-positive bacteria. May act as a ligand for C-C chemokine receptor CCR6. Can bind to mouse (but not human) CCR6 and induce chemotactic activity of CCR6-expressing cells. The protein is Beta-defensin 4 (Defb4) of Mus musculus (Mouse).